Here is a 387-residue protein sequence, read N- to C-terminus: Cytochrome b (387 aa).

A run of 4 helical transmembrane segments spans residues 32-52 (FGSLLLLCLIIQIITGVTLAM), 76-98 (WLVRYLHSNTASAFFFLVYLHIG), 113-133 (VWAIGTVILIVMIVTAFLGYV), and 179-199 (FFALHYLLPFILVALVLMHLI). Heme b is bound by residues H82 and H96. H183 and H197 together coordinate heme b. A ubiquinone is bound at residue H202. The next 4 helical transmembrane spans lie at 226 to 246 (YLFKDLITIFIFIFVLSSFVF), 290 to 310 (LLGVIAMFAAILAIMLLPITD), 322 to 342 (LSKFAFWVFVVNFLILMKLGA), and 349 to 369 (FIELGQLSTALYFGHFIIIVP).

This sequence belongs to the cytochrome b family. As to quaternary structure, fungal cytochrome b-c1 complex contains 10 subunits; 3 respiratory subunits, 2 core proteins and 5 low-molecular weight proteins. Cytochrome b-c1 complex is a homodimer. The cofactor is heme b.

It localises to the mitochondrion inner membrane. Component of the ubiquinol-cytochrome c reductase complex (complex III or cytochrome b-c1 complex) that is part of the mitochondrial respiratory chain. The b-c1 complex mediates electron transfer from ubiquinol to cytochrome c. Contributes to the generation of a proton gradient across the mitochondrial membrane that is then used for ATP synthesis. This Podospora anserina (strain S / ATCC MYA-4624 / DSM 980 / FGSC 10383) (Pleurage anserina) protein is Cytochrome b (COB).